The sequence spans 140 residues: Hexon-interlacing protein (140 aa).

Positions 100–127 form a coiled coil; the sequence is LTALLAQLDSLTRELNVVSQQLLDLRQQ.

The protein belongs to the adenoviridae hexon-interlacing protein family. Homotrimer. Interacts with hexon protein; this interaction tethers the hexons together. Self-interacts with adjacent proteins. Interacts with kinesin light chain KLC1; this interaction leads to capsid disruption at the nuclear pore complex during virus entry into host cell.

The protein resides in the virion. It localises to the host nucleus. Its function is as follows. Structural component of the virion that acts as a cement protein on the capsid exterior and forms triskelion structures consisting of three molecules that stabilize three hexon trimers at the center of each icosahedral facet and fixes the peripentonal hexons. Dispensable for assembly. During virus entry, recruits the anterograde motor kinesin-1 to the capsid docked at the nuclear pore complex thereby subjecting the docked capsid to a pulling force. The resulting tension leads to capsid disruption, dispersion of capsid fragments toward cell periphery and eventually viral DNA entry into the host nucleus. The chain is Hexon-interlacing protein from Human adenovirus C serotype 5 (HAdV-5).